Consider the following 431-residue polypeptide: Nuclear bridge Ish domain protein les1 (431 aa).

Positions 1–21 (MQPRFLLHGALLALGIQLCLS) are cleaved as a signal peptide.

The protein resides in the nucleus inner membrane. Inner nuclear envelope protein involved in nuclear fission, which is achieved via local disassembly of nuclear pores within the narrow bridge that links segregating daughter nuclei. Les1 restricts the process of local nuclear envelope breakdown to the bridge midzone to prevent the leakage of material from daughter nuclei during mitosis. The sequence is that of Nuclear bridge Ish domain protein les1 from Schizosaccharomyces pombe (strain 972 / ATCC 24843) (Fission yeast).